A 246-amino-acid polypeptide reads, in one-letter code: Probable transcriptional regulatory protein CLJ_B3338 (246 aa).

The protein belongs to the TACO1 family.

Its subcellular location is the cytoplasm. The chain is Probable transcriptional regulatory protein CLJ_B3338 from Clostridium botulinum (strain 657 / Type Ba4).